Consider the following 307-residue polypeptide: F-box protein At2g23160 (307 aa).

One can recognise an F-box domain in the interval 2-49 (NSSSPISIDLIAEILSRVPSKSVARFRCVSKPWASMIRRPYFTELFLT).

The polypeptide is F-box protein At2g23160 (Arabidopsis thaliana (Mouse-ear cress)).